A 680-amino-acid polypeptide reads, in one-letter code: DNA-directed RNA polymerase subunit beta' (680 aa).

Zn(2+)-binding residues include Cys69, Cys71, Cys87, and Cys90. Asp489, Asp491, and Asp493 together coordinate Mg(2+).

It belongs to the RNA polymerase beta' chain family. RpoC1 subfamily. As to quaternary structure, in plastids the minimal PEP RNA polymerase catalytic core is composed of four subunits: alpha, beta, beta', and beta''. When a (nuclear-encoded) sigma factor is associated with the core the holoenzyme is formed, which can initiate transcription. It depends on Mg(2+) as a cofactor. Zn(2+) serves as cofactor.

It localises to the plastid. The protein localises to the chloroplast. The catalysed reaction is RNA(n) + a ribonucleoside 5'-triphosphate = RNA(n+1) + diphosphate. Functionally, DNA-dependent RNA polymerase catalyzes the transcription of DNA into RNA using the four ribonucleoside triphosphates as substrates. The protein is DNA-directed RNA polymerase subunit beta' of Arabis hirsuta (Hairy rock-cress).